The sequence spans 175 residues: NADH-ubiquinone oxidoreductase chain 6 (175 aa).

Transmembrane regions (helical) follow at residues 1–21, 25–45, 47–67, 88–108, and 149–169; these read MTMY…VGFS, SPIY…GIVL, FGGS…MLVV, TVFG…YYAL, and YGTW…VVIM.

Belongs to the complex I subunit 6 family. As to quaternary structure, core subunit of respiratory chain NADH dehydrogenase (Complex I) which is composed of 45 different subunits.

It localises to the mitochondrion inner membrane. It catalyses the reaction a ubiquinone + NADH + 5 H(+)(in) = a ubiquinol + NAD(+) + 4 H(+)(out). Functionally, core subunit of the mitochondrial membrane respiratory chain NADH dehydrogenase (Complex I) which catalyzes electron transfer from NADH through the respiratory chain, using ubiquinone as an electron acceptor. Essential for the catalytic activity and assembly of complex I. This is NADH-ubiquinone oxidoreductase chain 6 (MT-ND6) from Sus scrofa (Pig).